An 85-amino-acid chain; its full sequence is Small ribosomal subunit protein bS16 (85 aa).

The protein belongs to the bacterial ribosomal protein bS16 family.

This Nitrosomonas eutropha (strain DSM 101675 / C91 / Nm57) protein is Small ribosomal subunit protein bS16.